The primary structure comprises 119 residues: Phytosulfokines 2 (119 aa).

The signal sequence occupies residues 1–34; that stretch reads MSTTRGVSSSSAAAALALLLLFALCFFSFHSAAA. Positions 35-109 are excised as a propeptide; the sequence is ARAVPRDEHQ…RRLLSDAHLD (75 aa). Sulfotyrosine is present on residues tyrosine 110 and tyrosine 112. The propeptide occupies 115-119; it reads HKNKP.

The protein belongs to the phytosulfokine family. In terms of processing, sulfation is important for activity and for the binding to a putative membrane receptor. Post-translationally, PSK-alpha is produced by endopeptidase digestion. PSK-beta is produced from PSK-alpha by exopeptidase digestion.

It localises to the secreted. In terms of biological role, promotes plant cell differentiation, organogenesis and somatic embryogenesis as well as cell proliferation. This Oryza sativa subsp. indica (Rice) protein is Phytosulfokines 2 (PSK2).